A 266-amino-acid chain; its full sequence is GTP-binding protein Rhes (266 aa).

26-33 (GASRVGKS) contacts GTP. An Effector region motif is present at residues 48–56 (YTPTIEDFH). Residues 73–77 (DTSGN) and 140–143 (NKND) contribute to the GTP site. Residues 189–235 (MAKLPHEMSPALHRKISVQYGDAFHPRPFCMRRVKEMDAYGMVSPFA) form an interaction with GNB1, GNB2 and GNB3 region. Cysteine 263 carries the post-translational modification Cysteine methyl ester. Cysteine 263 carries S-farnesyl cysteine lipidation. Residues 264–266 (TIQ) constitute a propeptide, removed in mature form.

Belongs to the small GTPase superfamily. RasD family. In terms of assembly, monomer (Potential). Interacts with PIK3CA and UBE2I. Interacts with GNB1, GNB2 and GNB3. Interacts with HTT; interacts with mutant HTT (mHTT) with a much higher affinity than wild type HTT. Post-translationally, farnesylated. Farnesylation is required for membrane targeting. In terms of tissue distribution, pancreatic endocrine cells (islets of Langerhans).

It localises to the cell membrane. Its function is as follows. GTPase signaling protein that binds to and hydrolyzes GTP. Regulates signaling pathways involving G-proteins-coupled receptor and heterotrimeric proteins such as GNB1, GNB2 and GNB3. May be involved in selected striatal competencies, mainly locomotor activity and motor coordination. In Homo sapiens (Human), this protein is GTP-binding protein Rhes (RASD2).